Consider the following 276-residue polypeptide: SF-assemblin (276 aa).

The segment at 1–31 is nonhelical region; sequence MSLRPFETPGGLSSLSPRRRDFSPTRPGTNG. The disordered stretch occupies residues 1–37; the sequence is MSLRPFETPGGLSSLSPRRRDFSPTRPGTNGPSAKLE. Residues 32–276 are rod; the sequence is PSAKLEHVTE…LQEGLKLVSA (245 aa). A coiled-coil region spans residues 67 to 145; it reads LLQESLQRIE…LVRDERESRR (79 aa).

This sequence belongs to the SF-assemblin family.

It localises to the cytoplasm. Its subcellular location is the cytoskeleton. Functionally, major component of the striated microtubule-associated fibers (SMAFs; system-I-fibers). In Chlamydomonas reinhardtii (Chlamydomonas smithii), this protein is SF-assemblin.